Consider the following 459-residue polypeptide: tRNA modification GTPase MnmE (459 aa).

3 residues coordinate (6S)-5-formyl-5,6,7,8-tetrahydrofolate: Arg-21, Glu-84, and Lys-123. The TrmE-type G domain occupies 219–380 (GMLTVIVGQP…LEKEIKQRVY (162 aa)). K(+) is bound at residue Asn-229. GTP-binding positions include 229-234 (NVGKSS), 248-254 (TDIPGTT), and 273-276 (DTAG). Ser-233 provides a ligand contact to Mg(2+). Residues Thr-248, Ile-250, and Thr-253 each contribute to the K(+) site. Thr-254 is a binding site for Mg(2+). (6S)-5-formyl-5,6,7,8-tetrahydrofolate is bound at residue Lys-459.

The protein belongs to the TRAFAC class TrmE-Era-EngA-EngB-Septin-like GTPase superfamily. TrmE GTPase family. In terms of assembly, homodimer. Heterotetramer of two MnmE and two MnmG subunits. It depends on K(+) as a cofactor.

The protein resides in the cytoplasm. Exhibits a very high intrinsic GTPase hydrolysis rate. Involved in the addition of a carboxymethylaminomethyl (cmnm) group at the wobble position (U34) of certain tRNAs, forming tRNA-cmnm(5)s(2)U34. The chain is tRNA modification GTPase MnmE from Desulfitobacterium hafniense (strain Y51).